The chain runs to 332 residues: Methionyl-tRNA formyltransferase (332 aa).

124–127 (SLLP) contacts (6S)-5,6,7,8-tetrahydrofolate.

It belongs to the Fmt family.

It carries out the reaction L-methionyl-tRNA(fMet) + (6R)-10-formyltetrahydrofolate = N-formyl-L-methionyl-tRNA(fMet) + (6S)-5,6,7,8-tetrahydrofolate + H(+). Functionally, attaches a formyl group to the free amino group of methionyl-tRNA(fMet). The formyl group appears to play a dual role in the initiator identity of N-formylmethionyl-tRNA by promoting its recognition by IF2 and preventing the misappropriation of this tRNA by the elongation apparatus. The chain is Methionyl-tRNA formyltransferase from Polynucleobacter necessarius subsp. necessarius (strain STIR1).